The chain runs to 154 residues: Probable chemoreceptor glutamine deamidase CheD (154 aa).

The protein belongs to the CheD family.

The enzyme catalyses L-glutaminyl-[protein] + H2O = L-glutamyl-[protein] + NH4(+). Functionally, probably deamidates glutamine residues to glutamate on methyl-accepting chemotaxis receptors (MCPs), playing an important role in chemotaxis. This chain is Probable chemoreceptor glutamine deamidase CheD, found in Methanococcus vannielii (strain ATCC 35089 / DSM 1224 / JCM 13029 / OCM 148 / SB).